Reading from the N-terminus, the 281-residue chain is Elongation factor 1-delta (281 aa).

Ala2 is modified (N-acetylalanine). Lys17 is subject to N6-acetyllysine. A phosphoserine mark is found at Ser37, Ser44, Ser60, Ser86, and Ser106. The segment at 80-115 (LVVRIASLEVENQSLRGVVQELQQAISKLEARLNVL) is leucine-zipper. Position 107 is an N6-acetyllysine (Lys107). Position 117 is an N6-acetyllysine; alternate (Lys117). The residue at position 117 (Lys117) is an N6-succinyllysine; alternate. Positions 118-172 (SSPGHRATAPQTQHVSPMRQVEPPAKKPATPAEDDEDDDIDLFGSDNEEEDKEAA) are disordered. Ser119 is modified (phosphoserine). Thr129 carries the phosphothreonine modification. Ser133 is modified (phosphoserine). The residue at position 147 (Thr147) is a Phosphothreonine. Over residues 149–169 (AEDDEDDDIDLFGSDNEEEDK) the composition is skewed to acidic residues. A Phosphoserine; by CK2 modification is found at Ser162. Residues 173-281 (QLREERLRQY…SVDIAAFNKI (109 aa)) form a catalytic (GEF) region.

Belongs to the EF-1-beta/EF-1-delta family. EF-1 is composed of 4 subunits: alpha, beta, delta isoform 1, and gamma. Isoform 2 interacts with HSF1 and NFE2L2.

It is found in the nucleus. In terms of biological role, EF-1-beta and EF-1-delta stimulate the exchange of GDP bound to EF-1-alpha to GTP, regenerating EF-1-alpha for another round of transfer of aminoacyl-tRNAs to the ribosome. Regulates induction of heat-shock-responsive genes through association with heat shock transcription factors and direct DNA-binding at heat shock promoter elements (HSE). In Macaca fascicularis (Crab-eating macaque), this protein is Elongation factor 1-delta (EEF1D).